Reading from the N-terminus, the 51-residue chain is Large ribosomal subunit protein bL33 (51 aa).

The segment at 1–21 is disordered; the sequence is MRDKIKLESGAGTGHFYTTTK.

Belongs to the bacterial ribosomal protein bL33 family.

The polypeptide is Large ribosomal subunit protein bL33 (Neisseria gonorrhoeae (strain ATCC 700825 / FA 1090)).